An 894-amino-acid chain; its full sequence is Phosphoenolpyruvate carboxylase (894 aa).

Catalysis depends on residues His143 and Lys556.

This sequence belongs to the PEPCase type 1 family. The cofactor is Mg(2+).

It catalyses the reaction oxaloacetate + phosphate = phosphoenolpyruvate + hydrogencarbonate. Forms oxaloacetate, a four-carbon dicarboxylic acid source for the tricarboxylic acid cycle. The polypeptide is Phosphoenolpyruvate carboxylase (Acinetobacter baylyi (strain ATCC 33305 / BD413 / ADP1)).